A 236-amino-acid polypeptide reads, in one-letter code: LexA repressor (236 aa).

Residues 26 to 46 constitute a DNA-binding region (H-T-H motif); sequence FDEMKEALDLASKSGIHRLIT. Positions 84 to 107 are disordered; sequence SPSVIEGGQGRSSPAPRPAANNDD. Residues Ser-157 and Lys-195 each act as for autocatalytic cleavage activity in the active site.

The protein belongs to the peptidase S24 family. In terms of assembly, homodimer.

It catalyses the reaction Hydrolysis of Ala-|-Gly bond in repressor LexA.. Represses a number of genes involved in the response to DNA damage (SOS response), including recA and lexA. In the presence of single-stranded DNA, RecA interacts with LexA causing an autocatalytic cleavage which disrupts the DNA-binding part of LexA, leading to derepression of the SOS regulon and eventually DNA repair. In Chelativorans sp. (strain BNC1), this protein is LexA repressor.